The chain runs to 342 residues: Homocysteine S-methyltransferase 4 (342 aa).

The Hcy-binding domain occupies 13 to 328 (ALRGFVREAG…ATVRAIARAV (316 aa)). 3 residues coordinate Zn(2+): Cys245, Cys313, and Cys314.

In terms of assembly, monomer. Requires Zn(2+) as cofactor.

The catalysed reaction is S-methyl-L-methionine + L-homocysteine = 2 L-methionine + H(+). Functionally, catalyzes methyl transfer from S-methylmethionine (SMM) to adenosyl-L-homocysteine (AdoMet). SMM degradation (by HMT-1, HMT-2, HMT-3 and HMT-4) and biosynthesis (by MMT1) constitute the SMM cycle in plants, which is probably required to achieve short term control of AdoMet level. In Zea mays (Maize), this protein is Homocysteine S-methyltransferase 4 (HMT-4).